We begin with the raw amino-acid sequence, 478 residues long: Ketoisovalerate oxidoreductase subunit VorA (478 aa).

In terms of assembly, heterotrimer of the VorA, VorB and VorC subunits.

The chain is Ketoisovalerate oxidoreductase subunit VorA (vorA) from Methanothermobacter marburgensis (strain ATCC BAA-927 / DSM 2133 / JCM 14651 / NBRC 100331 / OCM 82 / Marburg) (Methanobacterium thermoautotrophicum).